The sequence spans 69 residues: uncharacterized protein (69 aa).

Residues 1–15 (MLLYIVIIVACIISK) lie on the Cytoplasmic side of the membrane. Residues 16-36 (LVPNEYWAIHLFFIIMIFMVY) form a helical membrane-spanning segment. The Extracellular portion of the chain corresponds to 37 to 69 (MYEKLDIHQKYQFWNYTMSGLSGHNVQVICKCY). N-linked (GlcNAc...) asparagine; by host glycosylation occurs at Asn51.

This sequence belongs to the asfivirus X69R family.

It localises to the host membrane. This is an uncharacterized protein from Ornithodoros (relapsing fever ticks).